A 1187-amino-acid polypeptide reads, in one-letter code: Tyrosine-protein phosphatase non-receptor type 14 (1187 aa).

Residues 21-306 (FVTRIRLLDS…TRHKFYKQNK (286 aa)) form the FERM domain. 3 positions are modified to phosphoserine: Ser-314, Ser-461, and Ser-486. The span at 510 to 524 (LVSPSDQRNPKNNVV) shows a compositional bias: polar residues. Positions 510–531 (LVSPSDQRNPKNNVVPSKPGAS) are disordered. Residues Ser-591, Ser-593, Ser-594, and Ser-642 each carry the phosphoserine modification. Disordered stretches follow at residues 671–690 (LREQ…PQLP) and 787–824 (KAIS…KKEP). Residues 815–824 (SVKERVKKEP) are compositionally biased toward basic and acidic residues. Ser-831 carries the post-translational modification Phosphoserine. The Tyrosine-protein phosphatase domain maps to 909–1180 (VFTEYEQIPK…KFVYQVLIQF (272 aa)). Substrate contacts are provided by residues Asp-1079, 1121–1127 (CSAGVGR), and Gln-1165. Cys-1121 functions as the Phosphocysteine intermediate in the catalytic mechanism.

It belongs to the protein-tyrosine phosphatase family. Non-receptor class subfamily. Interacts with FLT4; the interaction is enhanced by stimulation with VEGFC. Interacts (via PPxY motifs) with YAP1 (via WW domains); this interaction leads to the cytoplasmic sequestration of YAP1 and inhibits its transcriptional co-activator activity. In terms of processing, ubiquitinated by the ECS (Elongin BC-CUL2/5-SOCS-box protein)/LRR1 E3 ligase complex and subsequently targeted to proteasomal degradation. In terms of tissue distribution, ubiquitous.

The protein localises to the cytoplasm. Its subcellular location is the cytoskeleton. It is found in the nucleus. The enzyme catalyses O-phospho-L-tyrosyl-[protein] + H2O = L-tyrosyl-[protein] + phosphate. Functionally, protein tyrosine phosphatase which may play a role in the regulation of lymphangiogenesis, cell-cell adhesion, cell-matrix adhesion, cell migration, cell growth and also regulates TGF-beta gene expression, thereby modulating epithelial-mesenchymal transition. Mediates beta-catenin dephosphorylation at adhesion junctions. Acts as a negative regulator of the oncogenic property of YAP, a downstream target of the hippo pathway, in a cell density-dependent manner. May function as a tumor suppressor. This chain is Tyrosine-protein phosphatase non-receptor type 14 (PTPN14), found in Homo sapiens (Human).